A 243-amino-acid polypeptide reads, in one-letter code: 1-(5-phosphoribosyl)-5-[(5-phosphoribosylamino)methylideneamino] imidazole-4-carboxamide isomerase (243 aa).

Aspartate 17 serves as the catalytic Proton acceptor. Aspartate 138 functions as the Proton donor in the catalytic mechanism.

It belongs to the HisA/HisF family.

The protein resides in the cytoplasm. It catalyses the reaction 1-(5-phospho-beta-D-ribosyl)-5-[(5-phospho-beta-D-ribosylamino)methylideneamino]imidazole-4-carboxamide = 5-[(5-phospho-1-deoxy-D-ribulos-1-ylimino)methylamino]-1-(5-phospho-beta-D-ribosyl)imidazole-4-carboxamide. Its pathway is amino-acid biosynthesis; L-histidine biosynthesis; L-histidine from 5-phospho-alpha-D-ribose 1-diphosphate: step 4/9. This chain is 1-(5-phosphoribosyl)-5-[(5-phosphoribosylamino)methylideneamino] imidazole-4-carboxamide isomerase, found in Deinococcus geothermalis (strain DSM 11300 / CIP 105573 / AG-3a).